A 384-amino-acid polypeptide reads, in one-letter code: Alanine racemase (384 aa).

Lys-39 (proton acceptor; specific for D-alanine) is an active-site residue. An N6-(pyridoxal phosphate)lysine modification is found at Lys-39. Arg-138 lines the substrate pocket. Tyr-265 functions as the Proton acceptor; specific for L-alanine in the catalytic mechanism. Met-312 is a substrate binding site.

The protein belongs to the alanine racemase family. It depends on pyridoxal 5'-phosphate as a cofactor.

The enzyme catalyses L-alanine = D-alanine. The protein operates within amino-acid biosynthesis; D-alanine biosynthesis; D-alanine from L-alanine: step 1/1. Catalyzes the interconversion of L-alanine and D-alanine. May also act on other amino acids. This chain is Alanine racemase (alr), found in Staphylococcus carnosus (strain TM300).